The chain runs to 729 residues: Catalase-peroxidase (729 aa).

A disordered region spans residues 1–20 (MHNGSNGSVEQRDSMPETSR). Residues 10-20 (EQRDSMPETSR) show a composition bias toward basic and acidic residues. A cross-link (tryptophyl-tyrosyl-methioninium (Trp-Tyr) (with M-240)) is located at residues 91-214 (WHAAGTYRTT…LGATVMGLIY (124 aa)). Catalysis depends on His-92, which acts as the Proton acceptor. Residues 214 to 240 (YVNPEGPESTPDPEWSAQRIRKSFGRM) constitute a cross-link (tryptophyl-tyrosyl-methioninium (Tyr-Met) (with W-91)). His-255 lines the heme b pocket.

It belongs to the peroxidase family. Peroxidase/catalase subfamily. In terms of assembly, homodimer or homotetramer. Heme b is required as a cofactor. Post-translationally, formation of the three residue Trp-Tyr-Met cross-link is important for the catalase, but not the peroxidase activity of the enzyme.

The catalysed reaction is H2O2 + AH2 = A + 2 H2O. It catalyses the reaction 2 H2O2 = O2 + 2 H2O. Bifunctional enzyme with both catalase and broad-spectrum peroxidase activity. This chain is Catalase-peroxidase, found in Salinibacter ruber (strain DSM 13855 / M31).